Reading from the N-terminus, the 320-residue chain is Ferrochelatase (320 aa).

2 residues coordinate Fe cation: His194 and Glu275.

The protein belongs to the ferrochelatase family. As to quaternary structure, monomer.

Its subcellular location is the cytoplasm. It carries out the reaction heme b + 2 H(+) = protoporphyrin IX + Fe(2+). It participates in porphyrin-containing compound metabolism; protoheme biosynthesis; protoheme from protoporphyrin-IX: step 1/1. Its function is as follows. Catalyzes the ferrous insertion into protoporphyrin IX. The protein is Ferrochelatase of Escherichia coli (strain SMS-3-5 / SECEC).